We begin with the raw amino-acid sequence, 644 residues long: Large subunit GTPase 1 homolog (644 aa).

Residues 1–31 (MGRRRAPGGGSLGRVLIRQQTQRSRSHRHTD) are disordered. Ser-93 and Ser-97 each carry phosphoserine. The CP-type G domain occupies 164–430 (WRQLWRVIER…LCDCPGLVMP (267 aa)). A GTP-binding site is contributed by 212-215 (NKAD). Positions 253–345 (KEEVDSVAGD…KNAENQQVNN (93 aa)) are disordered. Acidic residues predominate over residues 302 to 326 (CQEDEEEDWQTCSEEDSVPEEEEGC). GTP-binding positions include 379-386 (GYPNVGKS) and 423-426 (DCPG). A disordered region spans residues 618-644 (VPGKPWKKHGNRNKKEKSRRLYKHLDV). Over residues 622-644 (PWKKHGNRNKKEKSRRLYKHLDV) the composition is skewed to basic residues.

The protein belongs to the TRAFAC class YlqF/YawG GTPase family. LSG1 subfamily.

It localises to the cytoplasm. The protein localises to the endoplasmic reticulum. It is found in the nucleus. The protein resides in the cajal body. It carries out the reaction GTP + H2O = GDP + phosphate + H(+). Functionally, functions as a GTPase. May act by mediating the release of NMD3 from the 60S ribosomal subunit after export into the cytoplasm during the 60S ribosomal subunit maturation. The polypeptide is Large subunit GTPase 1 homolog (Mus musculus (Mouse)).